A 156-amino-acid polypeptide reads, in one-letter code: Small ribosomal subunit protein uS7 (156 aa).

The protein belongs to the universal ribosomal protein uS7 family. In terms of assembly, part of the 30S ribosomal subunit. Contacts proteins S9 and S11.

Its function is as follows. One of the primary rRNA binding proteins, it binds directly to 16S rRNA where it nucleates assembly of the head domain of the 30S subunit. Is located at the subunit interface close to the decoding center, probably blocks exit of the E-site tRNA. The protein is Small ribosomal subunit protein uS7 of Latilactobacillus sakei subsp. sakei (strain 23K) (Lactobacillus sakei subsp. sakei).